Here is a 417-residue protein sequence, read N- to C-terminus: Multifunctional CCA protein (417 aa).

Gly8 and Arg11 together coordinate ATP. CTP contacts are provided by Gly8 and Arg11. Mg(2+)-binding residues include Asp21 and Asp23. 3 residues coordinate ATP: Arg91, Arg137, and Arg140. CTP is bound by residues Arg91, Arg137, and Arg140. Positions Ser225–Phe326 constitute an HD domain.

Belongs to the tRNA nucleotidyltransferase/poly(A) polymerase family. Bacterial CCA-adding enzyme type 1 subfamily. As to quaternary structure, monomer. Can also form homodimers and oligomers. The cofactor is Mg(2+). It depends on Ni(2+) as a cofactor.

The catalysed reaction is a tRNA precursor + 2 CTP + ATP = a tRNA with a 3' CCA end + 3 diphosphate. It carries out the reaction a tRNA with a 3' CCA end + 2 CTP + ATP = a tRNA with a 3' CCACCA end + 3 diphosphate. Functionally, catalyzes the addition and repair of the essential 3'-terminal CCA sequence in tRNAs without using a nucleic acid template. Adds these three nucleotides in the order of C, C, and A to the tRNA nucleotide-73, using CTP and ATP as substrates and producing inorganic pyrophosphate. tRNA 3'-terminal CCA addition is required both for tRNA processing and repair. Also involved in tRNA surveillance by mediating tandem CCA addition to generate a CCACCA at the 3' terminus of unstable tRNAs. While stable tRNAs receive only 3'-terminal CCA, unstable tRNAs are marked with CCACCA and rapidly degraded. This is Multifunctional CCA protein from Neisseria meningitidis serogroup A / serotype 4A (strain DSM 15465 / Z2491).